The chain runs to 213 residues: Chloramphenicol acetyltransferase 3 (213 aa).

His-189 (proton acceptor) is an active-site residue.

The protein belongs to the chloramphenicol acetyltransferase family. Homotrimer.

It carries out the reaction chloramphenicol + acetyl-CoA = chloramphenicol 3-acetate + CoA. Functionally, this enzyme is an effector of chloramphenicol resistance in bacteria. This chain is Chloramphenicol acetyltransferase 3 (cat3), found in Escherichia coli.